A 433-amino-acid chain; its full sequence is MYKTQMEAAKKGILTKEMKSIAESESIDEKVLMERVASGEITIPANKKHSSLLAKGVGTGLSTKINVNLGISKDCPNVDKELEKVKVAIDMKVDAIMDLSSFGKTEEFRKKLITMSTAMVGTVPVYDAIGFYDKELKDIKAEEFLDVVRKHAEDGVDFVTIHAGLNREAVNLFKRNERITNIVSRGGSLMYAWMELNNAENPFYENFDKLLDICEEYDMTISLGDALRPGCLNDATDACQIKELITLGELTKRAWERNVQIIIEGPGHMAIDEIEANVKLEKKLCHNAPFYVLGPLVTDIAPGYDHITSAIGGAIAAAAGVDFLCYVTPAEHLRLPDLDDMKEGIIASRIAAHAADISKKVPKAIDWDNRMAKYRTDIDWEGMFTEAIDEEKARRYRKESTPENEDTCTMCGKMCSMRTMKKMMSGEDVNILK.

Substrate-binding positions include N68, M97, Y126, H162, 184–186 (SRG), 225–228 (DALR), and E264. H268 serves as a coordination point for Zn(2+). Substrate is bound at residue Y291. Zn(2+) is bound at residue H332. Residues C408, C411, and C415 each contribute to the [4Fe-4S] cluster site.

This sequence belongs to the ThiC family. Requires [4Fe-4S] cluster as cofactor.

It catalyses the reaction 5-amino-1-(5-phospho-beta-D-ribosyl)imidazole + S-adenosyl-L-methionine = 4-amino-2-methyl-5-(phosphooxymethyl)pyrimidine + CO + 5'-deoxyadenosine + formate + L-methionine + 3 H(+). The protein operates within cofactor biosynthesis; thiamine diphosphate biosynthesis. Its function is as follows. Catalyzes the synthesis of the hydroxymethylpyrimidine phosphate (HMP-P) moiety of thiamine from aminoimidazole ribotide (AIR) in a radical S-adenosyl-L-methionine (SAM)-dependent reaction. In Fusobacterium nucleatum subsp. nucleatum (strain ATCC 25586 / DSM 15643 / BCRC 10681 / CIP 101130 / JCM 8532 / KCTC 2640 / LMG 13131 / VPI 4355), this protein is Phosphomethylpyrimidine synthase.